The primary structure comprises 247 residues: MGQKVSPIGLRLGINKVWSSRWYAGPREYAALLHEDLRIRSMIRSFPECKNADIAEVEIVRHPQRVTVVMHTARPGVVIGAKGVNIEKIGAEVQKRLNKKVQIKVKEIKRMELNAYLVAQNVARQLTARVSFRKCLRQACAGTMKSGAQGVKIRVSGRLGGAEMSRTEEIKEGRTPLHTLRADIDYGFAEAHTTYGSIGVKVWLYSGMMYGNECRKDVGSLLRRSRRESGQKSDELVRDERTHAERG.

One can recognise a KH type-2 domain in the interval 39 to 109; that stretch reads IRSMIRSFPE…KVQIKVKEIK (71 aa). The interval 224-247 is disordered; that stretch reads RSRRESGQKSDELVRDERTHAERG. A compositionally biased stretch (basic and acidic residues) spans 227–247; it reads RESGQKSDELVRDERTHAERG.

The protein belongs to the universal ribosomal protein uS3 family. As to quaternary structure, part of the 30S ribosomal subunit. Forms a tight complex with proteins S10 and S14.

In terms of biological role, binds the lower part of the 30S subunit head. Binds mRNA in the 70S ribosome, positioning it for translation. This Treponema pallidum (strain Nichols) protein is Small ribosomal subunit protein uS3.